Consider the following 142-residue polypeptide: Protein OrfX1 (142 aa).

The protein belongs to the TULIP P47 family. OrfX1 was not detected as part of a crude toxin extract that includes BoNTA2/NTNH, P47, OrfX2 and OrfX3.

Part of a botulinum neurotoxin type A2 (BoNT) locus; may be part of a progenitor toxin complex required to protect BoNT during its passage through the host gastrointestinal tract. Binds phosphatidylinositol (3,4) bisphosphate, phosphatidylethanolamine and phosphatidylserine. This is Protein OrfX1 (orfX1) from Clostridium botulinum (strain Kyoto / Type A2).